A 304-amino-acid chain; its full sequence is Homoserine O-acetyltransferase (304 aa).

Catalysis depends on Cys142, which acts as the Acyl-thioester intermediate. Residues Lys163 and Ser192 each contribute to the substrate site. His235 acts as the Proton acceptor in catalysis. The active site involves Glu237. Residue Arg249 coordinates substrate.

Belongs to the MetA family.

The protein resides in the cytoplasm. The catalysed reaction is L-homoserine + acetyl-CoA = O-acetyl-L-homoserine + CoA. Its pathway is amino-acid biosynthesis; L-methionine biosynthesis via de novo pathway; O-acetyl-L-homoserine from L-homoserine: step 1/1. Functionally, transfers an acetyl group from acetyl-CoA to L-homoserine, forming acetyl-L-homoserine. In Clostridium beijerinckii (strain ATCC 51743 / NCIMB 8052) (Clostridium acetobutylicum), this protein is Homoserine O-acetyltransferase.